The primary structure comprises 367 residues: Glutamate 5-kinase (367 aa).

Residue Lys9 participates in ATP binding. Positions 49, 136, and 148 each coordinate substrate. ATP-binding positions include Thr168–Asp169 and Thr210–Lys216. The region spanning Ser276–Arg350 is the PUA domain.

It belongs to the glutamate 5-kinase family.

Its subcellular location is the cytoplasm. The enzyme catalyses L-glutamate + ATP = L-glutamyl 5-phosphate + ADP. The protein operates within amino-acid biosynthesis; L-proline biosynthesis; L-glutamate 5-semialdehyde from L-glutamate: step 1/2. Catalyzes the transfer of a phosphate group to glutamate to form L-glutamate 5-phosphate. The polypeptide is Glutamate 5-kinase (Bacillus mycoides (strain KBAB4) (Bacillus weihenstephanensis)).